A 312-amino-acid polypeptide reads, in one-letter code: Glyoxylate/hydroxypyruvate reductase A (312 aa).

The active site involves Arg-227. Catalysis depends on His-275, which acts as the Proton donor.

Belongs to the D-isomer specific 2-hydroxyacid dehydrogenase family. GhrA subfamily.

Its subcellular location is the cytoplasm. The catalysed reaction is glycolate + NADP(+) = glyoxylate + NADPH + H(+). It carries out the reaction (R)-glycerate + NAD(+) = 3-hydroxypyruvate + NADH + H(+). It catalyses the reaction (R)-glycerate + NADP(+) = 3-hydroxypyruvate + NADPH + H(+). In terms of biological role, catalyzes the NADPH-dependent reduction of glyoxylate and hydroxypyruvate into glycolate and glycerate, respectively. In Escherichia coli (strain ATCC 8739 / DSM 1576 / NBRC 3972 / NCIMB 8545 / WDCM 00012 / Crooks), this protein is Glyoxylate/hydroxypyruvate reductase A.